We begin with the raw amino-acid sequence, 429 residues long: Malate dehydrogenase [NADP] 1, chloroplastic (429 aa).

The transit peptide at 1–40 (MGLSTAYSPVGSHLAPAPLGHRRSAQLHRPRRALLATVRC) directs the protein to the chloroplast. Cys-64 and Cys-69 are disulfide-bonded. An NADP(+)-binding site is contributed by 93 to 99 (GAAGMIS). Substrate-binding residues include Arg-174 and Arg-180. NADP(+) contacts are provided by residues Asn-187, Gln-194, and 211-213 (VGN). Substrate-binding residues include Asn-213 and Arg-244. The active-site Proton acceptor is the His-269. A disulfide bridge connects residues Cys-405 and Cys-417.

This sequence belongs to the LDH/MDH superfamily. MDH type 2 family. In terms of assembly, homodimer.

It localises to the plastid. It is found in the chloroplast. The enzyme catalyses (S)-malate + NADP(+) = oxaloacetate + NADPH + H(+). Chloroplast NADP-MDH is activated upon illumination. In order to be enzymatically active, disulfide bridges on the protein must be reduced by thioredoxin which receives electrons from ferredoxin and the electron transport system of photosynthesis. In terms of biological role, the chloroplastic, NADP-dependent form is essential for the photosynthesis C4 cycle, which allows plants to circumvent the problem of photorespiration. In C4 plants, NADP-MDH activity acts to convert oxaloacetate to malate in chloroplasts of mesophyll cells for transport to the bundle sheath cells. This chain is Malate dehydrogenase [NADP] 1, chloroplastic, found in Sorghum bicolor (Sorghum).